The chain runs to 238 residues: Protein shisa-3 homolog (238 aa).

A signal peptide spans 1-21 (MGALLAFCLLVGLLRWGPAGA). Over 22 to 98 (QQPGEYCHGW…GITAQPVYVP (77 aa)) the chain is Lumenal. The chain crosses the membrane as a helical span at residues 99-119 (FLIVGSIFIAFIILGSLVAIY). Over 120 to 238 (CCTCLRPKEP…GKSCPDFSSS (119 aa)) the chain is Cytoplasmic.

The protein belongs to the shisa family.

It is found in the endoplasmic reticulum membrane. Functionally, plays an essential role in the maturation of presomitic mesoderm cells by individual attenuation of both FGF and WNT signaling. The sequence is that of Protein shisa-3 homolog (Shisa3) from Mus musculus (Mouse).